The chain runs to 113 residues: Small ribosomal subunit protein bS6 (113 aa).

This sequence belongs to the bacterial ribosomal protein bS6 family.

Its function is as follows. Binds together with bS18 to 16S ribosomal RNA. The polypeptide is Small ribosomal subunit protein bS6 (rpsF) (Synechocystis sp. (strain ATCC 27184 / PCC 6803 / Kazusa)).